Here is a 605-residue protein sequence, read N- to C-terminus: Condensin-2 complex subunit H2 (605 aa).

Threonine 19 carries the phosphothreonine modification. Phosphoserine is present on residues serine 95, serine 200, serine 208, serine 228, and serine 232. Residues 194–331 form a disordered region; that stretch reads LEPEGMSPME…PFDSLESKPF (138 aa). A compositionally biased stretch (acidic residues) spans 256 to 266; sequence GEDEDAEEAVE. Phosphoserine occurs at positions 282, 284, 466, and 492.

Belongs to the CND2 H2 (condensin-2 subunit 2) family. In terms of assembly, component of the condensin-2 complex, which contains the SMC2 and SMC4 heterodimer, and three non SMC subunits, NCAPG2, NCAPH2 and NCAPD3 that probably regulate the complex.

The protein resides in the nucleus. Its subcellular location is the chromosome. Regulatory subunit of the condensin-2 complex, a complex that seems to provide chromosomes with an additional level of organization and rigidity and in establishing mitotic chromosome architecture. May promote the resolution of double-strand DNA catenanes (intertwines) between sister chromatids. Condensin-mediated compaction likely increases tension in catenated sister chromatids, providing directionality for type II topoisomerase-mediated strand exchanges toward chromatid decatenation. Required for decatenation of chromatin bridges at anaphase. Early in neurogenesis, may play an essential role to ensure accurate mitotic chromosome condensation in neuron stem cells, ultimately affecting neuron pool and cortex size. Seems to have lineage-specific role in T-cell development. This chain is Condensin-2 complex subunit H2 (NCAPH2), found in Homo sapiens (Human).